The chain runs to 220 residues: Phosphatidylserine decarboxylase proenzyme (220 aa).

Residue S188 is the Schiff-base intermediate with substrate; via pyruvic acid of the active site. A Pyruvic acid (Ser); by autocatalysis modification is found at S188.

Belongs to the phosphatidylserine decarboxylase family. PSD-A subfamily. Heterodimer of a large membrane-associated beta subunit and a small pyruvoyl-containing alpha subunit. Requires pyruvate as cofactor. Is synthesized initially as an inactive proenzyme. Formation of the active enzyme involves a self-maturation process in which the active site pyruvoyl group is generated from an internal serine residue via an autocatalytic post-translational modification. Two non-identical subunits are generated from the proenzyme in this reaction, and the pyruvate is formed at the N-terminus of the alpha chain, which is derived from the carboxyl end of the proenzyme. The post-translation cleavage follows an unusual pathway, termed non-hydrolytic serinolysis, in which the side chain hydroxyl group of the serine supplies its oxygen atom to form the C-terminus of the beta chain, while the remainder of the serine residue undergoes an oxidative deamination to produce ammonia and the pyruvoyl prosthetic group on the alpha chain.

The protein resides in the cell membrane. It catalyses the reaction a 1,2-diacyl-sn-glycero-3-phospho-L-serine + H(+) = a 1,2-diacyl-sn-glycero-3-phosphoethanolamine + CO2. Its pathway is phospholipid metabolism; phosphatidylethanolamine biosynthesis; phosphatidylethanolamine from CDP-diacylglycerol: step 2/2. Functionally, catalyzes the formation of phosphatidylethanolamine (PtdEtn) from phosphatidylserine (PtdSer). This is Phosphatidylserine decarboxylase proenzyme from Cytophaga hutchinsonii (strain ATCC 33406 / DSM 1761 / CIP 103989 / NBRC 15051 / NCIMB 9469 / D465).